Reading from the N-terminus, the 390-residue chain is Caveolae-associated protein 1 (390 aa).

Residue M1 is modified to N-acetylmethionine. Residues 1 to 40 (MEDPTLYIVERPLPGYPDAEAPEPSSAGAQAAEEPSGAGS) form a disordered region. The segment at 1-98 (MEDPTLYIVE…IQGELSKLGK (98 aa)) is required for homotrimerization and for interaction with CAVIN2 and CAVIN3. A compositionally biased stretch (low complexity) spans 22–40 (PEPSSAGAQAAEEPSGAGS). Phosphoserine is present on residues S36, S40, and S46. Residues 52–62 (VLVLSLLDKII) form a nuclear export signal region. The interval 53 to 75 (LVLSLLDKIIGAVDQIQLTQAQL) is leucine-zipper 1. K116 participates in a covalent cross-link: Glycyl lysine isopeptide (Lys-Gly) (interchain with G-Cter in SUMO2). At S118 the chain carries Phosphoserine. Residue K122 forms a Glycyl lysine isopeptide (Lys-Gly) (interchain with G-Cter in SUMO2) linkage. A nuclear localization signal region spans residues 136 to 152 (KKLEVNEAELLRRRNFK). Y156 carries the post-translational modification Phosphotyrosine. K161 participates in a covalent cross-link: Glycyl lysine isopeptide (Lys-Gly) (interchain with G-Cter in SUMO1); alternate. K161 is covalently cross-linked (Glycyl lysine isopeptide (Lys-Gly) (interchain with G-Cter in SUMO2); alternate). K165 is covalently cross-linked (Glycyl lysine isopeptide (Lys-Gly) (interchain with G-Cter in SUMO2)). Positions 166 to 186 (LSISKSLKESEALPEKEGEEL) are leucine-zipper 2. S167 and S169 each carry phosphoserine. A Glycyl lysine isopeptide (Lys-Gly) (interchain with G-Cter in SUMO2) cross-link involves residue K170. 2 positions are modified to phosphoserine: S171 and S175. Residues 172-181 (LKESEALPEK) show a composition bias toward basic and acidic residues. Residues 172 to 201 (LKESEALPEKEGEELGEGERPEEDAAALEL) form a disordered region. The segment covering 182-201 (EGEELGEGERPEEDAAALEL) has biased composition (acidic residues). Residues 199–282 (LELSSDEAVE…RMNKLGTRLV (84 aa)) are a coiled coil. Phosphoserine occurs at positions 202 and 203. Residues 233–249 (KKAFSKEKMEKTKVRTR) are nuclear localization signal. The interval 257 to 297 (LKTKENLEKTRHTLEKRMNKLGTRLVPAERREKLKTSRDKL) is leucine-zipper 3. Phosphoserine is present on S300. The residue at position 302 (T302) is a Phosphothreonine. Y308 is subject to Phosphotyrosine. Residue K326 forms a Glycyl lysine isopeptide (Lys-Gly) (interchain with G-Cter in SUMO2) linkage. Residues 344-366 (VGADDDEGGAERGEAGDLRRGSS) form a disordered region. Positions 352–365 (GAERGEAGDLRRGS) are enriched in basic and acidic residues. Residues S365, S366, S379, S387, and S389 each carry the phosphoserine modification.

This sequence belongs to the CAVIN family. In terms of assembly, component of the CAVIN complex composed of CAVIN1, CAVIN2, CAVIN3 and CAVIN4. Homotrimer. Interacts with TTF1. Interacts with RNA polymerase I subunit POLR1A/RPA1. Binds the 3' end of pre-rRNA. Interacts with transcription factor ZNF148. Interacts with LIPE in the adipocyte cytoplasm. Interacts with CAV1 and CAVIN3. Interacts with CAVIN2. Interacts with CAVIN4 and CAV3. Post-translationally, phosphorylated. Present in active and inactive forms. Changes in phosphorylation pattern may alter activity. Phosphorylation at Tyr-156 is essential for its functionin the regulation of ribosomal transcriptional activity. In terms of processing, five truncated forms are found in the caveolae. These are thought to be the result of proteolysis and may be phosphorylation-dependent. Monoubiquitinated.

The protein localises to the membrane. It is found in the caveola. It localises to the cell membrane. Its subcellular location is the microsome. The protein resides in the endoplasmic reticulum. The protein localises to the cytoplasm. It is found in the cytosol. It localises to the mitochondrion. Its subcellular location is the nucleus. Plays an important role in caveolae formation and organization. Essential for the formation of caveolae in all tissues. Core component of the CAVIN complex which is essential for recruitment of the complex to the caveolae in presence of calveolin-1 (CAV1). Essential for normal oligomerization of CAV1. Promotes ribosomal transcriptional activity in response to metabolic challenges in the adipocytes and plays an important role in the formation of the ribosomal transcriptional loop. Dissociates transcription complexes paused by DNA-bound TTF1, thereby releasing both RNA polymerase I and pre-RNA from the template. The caveolae biogenesis pathway is required for the secretion of proteins such as GASK1A. This is Caveolae-associated protein 1 from Homo sapiens (Human).